We begin with the raw amino-acid sequence, 235 residues long: Vinculin (235 aa).

It belongs to the vinculin/alpha-catenin family. In terms of assembly, exhibits self-association properties. In terms of processing, phosphorylated on serines, threonines and tyrosines. Acetylated by myristic acid and/or palmitic acid.

The protein resides in the cell membrane. The protein localises to the cell junction. It is found in the adherens junction. It localises to the focal adhesion. Its subcellular location is the cytoplasm. The protein resides in the cytoskeleton. The protein localises to the sarcolemma. It is found in the cell projection. It localises to the podosome. In terms of biological role, involved in cell adhesion. May be involved in the attachment of the actin-based microfilaments to the plasma membrane. This chain is Vinculin (vcl), found in Xenopus laevis (African clawed frog).